A 570-amino-acid chain; its full sequence is PTS system lactose-specific EIICB component (570 aa).

Residues 9–410 form the PTS EIIC type-3 domain; sequence IEKGKPFFEK…VVDIIIYYPF (402 aa). A run of 9 helical transmembrane segments spans residues 31–51, 65–85, 104–124, 133–153, 178–198, 223–243, 283–303, 340–360, and 382–402; these read GFIS…IAYV, AILM…VAGT, INFI…ASDP, AFMG…TVIV, FKDL…DLVI, GWIG…VGIH, MFIV…MFMW, VFFI…KLFV, and IIMG…LIVV. One can recognise a PTS EIIB type-3 domain in the interval 467 to 570; the sequence is QTNVLVLCAG…LDFVQQQFEN (104 aa). The Phosphocysteine intermediate; for EIIB activity role is filled by Cys-474. Phosphocysteine; by EIIA is present on Cys-474.

The protein resides in the cell membrane. The catalysed reaction is lactose(out) + N(pros)-phospho-L-histidyl-[protein] = lactose 6-phosphate(in) + L-histidyl-[protein]. The phosphoenolpyruvate-dependent sugar phosphotransferase system (sugar PTS), a major carbohydrate active transport system, catalyzes the phosphorylation of incoming sugar substrates concomitantly with their translocation across the cell membrane. The enzyme II LacEF PTS system is involved in lactose transport. This chain is PTS system lactose-specific EIICB component, found in Staphylococcus aureus (strain MSSA476).